We begin with the raw amino-acid sequence, 83 residues long: uncharacterized protein (83 aa).

Helical transmembrane passes span 11-31 and 48-68; these read FYCI…SFLL and WHNL…HIWM.

It localises to the cell membrane. This is an uncharacterized protein from Bacillus subtilis (strain 168).